Consider the following 977-residue polypeptide: Disks large-associated protein 1 (977 aa).

Disordered regions lie at residues 150 to 203 and 349 to 371; these read TKSH…GWWS and KAMG…KVAA. S169, S356, S359, S362, S366, S383, S412, S415, S419, S422, S431, S503, S510, and S562 each carry phosphoserine. T563 carries the post-translational modification Phosphothreonine. Residues S565 and S589 each carry the phosphoserine modification. A Phosphothreonine modification is found at T590. 2 positions are modified to phosphoserine: S592 and S595. Interaction with DYL2 regions lie at residues 650 to 661 and 672 to 683; these read LSIGIQVDDAEE and SKFQSVGVQVEE. The tract at residues 899–965 is disordered; sequence WKQMDPLDKK…QNSATESAES (67 aa). Composition is skewed to basic and acidic residues over residues 903–912 and 928–943; these read DPLDKKERRA and IRER…EARK. S932 is subject to Phosphoserine. Residues 954–963 are compositionally biased toward polar residues; sequence VRQNSATESA. The short motif at 975-977 is the PDZ-binding element; it reads TRL.

This sequence belongs to the SAPAP family. Interacts with guanylate kinase-like domain of DLG1, DLG2, DLG3, DLG4 and AIP1. Interacts with the PDZ domain of SHANK1, SHANK2 and SHANK3. Found in a complex with DLG4 and SHANK1, SHANK2 or SHANK3. Found in a complex with DLG4 and BEGAIN. Interacts with DYL2 and LRFN1. Interacts with MPP2 (via the SH3-Guanylate kinase-like sub-module). In terms of processing, ubiquitinated by TRIM3; leading to proteasomal degradation. In terms of tissue distribution, expressed in brain.

It localises to the cell membrane. The protein localises to the postsynaptic density. It is found in the synapse. In terms of biological role, part of the postsynaptic scaffold in neuronal cells. The protein is Disks large-associated protein 1 (DLGAP1) of Homo sapiens (Human).